The primary structure comprises 152 residues: Large-conductance mechanosensitive channel (152 aa).

3 helical membrane passes run 26-46, 50-70, and 92-112; these read VLDLAVGVVIGAAFSAIVGSA, ILTPFIGLITGGVDFSNLFIT, and IGVFLNAVIQFLIIAFFIFWL.

The protein belongs to the MscL family. Homopentamer.

Its subcellular location is the cell inner membrane. Channel that opens in response to stretch forces in the membrane lipid bilayer. May participate in the regulation of osmotic pressure changes within the cell. In Gluconobacter oxydans (strain 621H) (Gluconobacter suboxydans), this protein is Large-conductance mechanosensitive channel.